A 339-amino-acid polypeptide reads, in one-letter code: Annexin A2 (339 aa).

Serine 2 is modified (N-acetylserine). An S100A10-binding site region spans residues 2–24; that stretch reads STVHEILCKLSLEGDHSTPPSAY. The residue at position 24 (tyrosine 24) is a Phosphotyrosine; by SRC. The residue at position 26 (serine 26) is a Phosphoserine; by PKC. 2 Annexin repeats span residues 33-104 and 105-176; these read FDAE…GLLK and TPAQ…ALAK. Lysine 49 is subject to N6-acetyllysine; alternate. Residue lysine 49 forms a Glycyl lysine isopeptide (Lys-Gly) (interchain with G-Cter in SUMO1); alternate linkage. Lysine 49 participates in a covalent cross-link: Glycyl lysine isopeptide (Lys-Gly) (interchain with G-Cter in SUMO2); alternate. Lysine 152 carries the N6-acetyllysine modification. Serine 184 is modified (phosphoserine). 2 Annexin repeats span residues 189 to 261 and 265 to 336; these read ELID…NLVQ and NKPL…YLCG. The residue at position 199 (tyrosine 199) is a Phosphotyrosine. Lysine 227 bears the N6-acetyllysine mark.

This sequence belongs to the annexin family. Heterotetramer containing 2 light chains of S100A10/p11 and 2 heavy chains of ANXA2/p36. Interacts with ATP1B1. Interacts with DYSF. Interacts with COCH. Interacts (via repeat Annexin 1) with PCSK9 (via the C-terminal domain); the interaction inhibits the degradation of LDLR. Interacts with CEACAM1 (via the cytoplasmic domain); this interaction is regulated by phosphorylation of CEACAM1. Interacts with APPL2 and APPL1; targets APPL2 to endosomes and acting in parallel to RAB5A. Interacts with S100A4. May interact with UBAP2. Interacts with PLEKHG4B; this interaction is required for PLEKHG4B localization to cell-cell adhesions. As to quaternary structure, (Microbial infection) Interacts with human cytomegalovirus (HCMV). In terms of assembly, (Microbial infection) Interacts with M.pneumoniae CARDS toxin; CARDS probably uses this protein as a receptor. A portion of internalized CARDS remains associated with intracellular annexin 2. In terms of processing, phosphorylation of Tyr-24 enhances heat stress-induced translocation to the cell surface. ISGylated.

It localises to the secreted. The protein resides in the extracellular space. Its subcellular location is the extracellular matrix. The protein localises to the basement membrane. It is found in the melanosome. Its function is as follows. Calcium-regulated membrane-binding protein whose affinity for calcium is greatly enhanced by anionic phospholipids. It binds two calcium ions with high affinity. May be involved in heat-stress response. Inhibits PCSK9-enhanced LDLR degradation, probably reduces PCSK9 protein levels via a translational mechanism but also competes with LDLR for binding with PCSK9. Binds to endosomes damaged by phagocytosis of particulate wear debris and participates in endosomal membrane stabilization, thereby limiting NLRP3 inflammasome activation. Required for endothelial cell surface plasmin generation and may support fibrinolytic surveillance and neoangiogenesis. In terms of biological role, (Microbial infection) Binds M.pneumoniae CARDS toxin, probably serves as one receptor for this pathogen. When ANXA2 is down-regulated by siRNA, less toxin binds to human cells and less vacuolization (a symptom of M.pneumoniae infection) is seen. The sequence is that of Annexin A2 (ANXA2) from Homo sapiens (Human).